The primary structure comprises 309 residues: Transcription elongation factor S-II (309 aa).

One can recognise a TFIIS N-terminal domain in the interval 5 to 79 (EVLVHVKNLE…SSWKDAINKN (75 aa)). Residues 78 to 142 (KNKRSRQAQQ…NSKNDGVDTA (65 aa)) are disordered. The segment covering 88–102 (HHQDHAPGNAEDKTT) has biased composition (basic and acidic residues). Over residues 103-120 (VGESVNGVQQPASSQSDA) the composition is skewed to polar residues. A Phosphoserine modification is found at S116. The TFIIS central domain maps to 148–264 (LRDQVLKALY…NAQGATIERS (117 aa)). The TFIIS-type zinc finger occupies 267-307 (DRFTCGKCKEKKVSYYQLQTRSADEPLTTFCTCEACGNRWK). Residues C271, C274, C299, and C302 each contribute to the Zn(2+) site.

Belongs to the TFS-II family.

The protein resides in the nucleus. Necessary for efficient RNA polymerase II transcription elongation past template-encoded arresting sites. The arresting sites in DNA have the property of trapping a certain fraction of elongating RNA polymerases that pass through, resulting in locked ternary complexes. Cleavage of the nascent transcript by S-II allows the resumption of elongation from the new 3'-terminus. In terms of biological role, can promote the transfer of one strand of a double-stranded DNA molecule to a homologous single strand and thus may be involved in recombination. The polypeptide is Transcription elongation factor S-II (DST1) (Saccharomyces cerevisiae (strain ATCC 204508 / S288c) (Baker's yeast)).